The primary structure comprises 425 residues: Tol-Pal system protein TolB (425 aa).

Positions 1–23 are cleaved as a signal peptide; sequence MQMMKKRILLCLLVGMTCLPVLA.

This sequence belongs to the TolB family. As to quaternary structure, the Tol-Pal system is composed of five core proteins: the inner membrane proteins TolA, TolQ and TolR, the periplasmic protein TolB and the outer membrane protein Pal. They form a network linking the inner and outer membranes and the peptidoglycan layer.

It is found in the periplasm. Part of the Tol-Pal system, which plays a role in outer membrane invagination during cell division and is important for maintaining outer membrane integrity. This chain is Tol-Pal system protein TolB, found in Albidiferax ferrireducens (strain ATCC BAA-621 / DSM 15236 / T118) (Rhodoferax ferrireducens).